A 588-amino-acid chain; its full sequence is Probable urocanate hydratase (588 aa).

The span at 1 to 15 (MDTPSAAAETSEPSA) shows a compositional bias: low complexity. A disordered region spans residues 1–22 (MDTPSAAAETSEPSAQWQAYRG). Residues 62-63 (GG), Gln-140, 188-190 (GMG), Glu-208, Arg-213, 254-255 (NA), 275-279 (QTSAH), and Tyr-334 each bind NAD(+). The active site involves Cys-431. Gly-520 contacts NAD(+).

Belongs to the urocanase family. The cofactor is NAD(+).

It is found in the cytoplasm. It catalyses the reaction 4-imidazolone-5-propanoate = trans-urocanate + H2O. It participates in amino-acid degradation; L-histidine degradation into L-glutamate; N-formimidoyl-L-glutamate from L-histidine: step 2/3. Functionally, catalyzes the conversion of urocanate to 4-imidazolone-5-propionate. The chain is Probable urocanate hydratase from Halobacterium salinarum (strain ATCC 29341 / DSM 671 / R1).